A 105-amino-acid chain; its full sequence is Met repressor (105 aa).

This sequence belongs to the MetJ family. In terms of assembly, homodimer.

The protein localises to the cytoplasm. This regulatory protein, when combined with SAM (S-adenosylmethionine) represses the expression of the methionine regulon and of enzymes involved in SAM synthesis. This is Met repressor from Pectobacterium carotovorum subsp. carotovorum (strain PC1).